We begin with the raw amino-acid sequence, 708 residues long: Protein psiF (708 aa).

An N-terminal signal peptide occupies residues 1–19; it reads MKYLFIAIILILYCSFTKA. The Extracellular portion of the chain corresponds to 20-643; sequence DQKKFLVNMY…QSTAVKVGVG (624 aa). N-linked (GlcNAc...) asparagine glycosylation is found at N78, N116, N222, N317, N318, N371, N498, and N600. The region spanning 103 to 263 is the PA14 domain; the sequence is TQTAGSQNYY…YDYCGICNGK (161 aa). The chain crosses the membrane as a helical span at residues 644-664; that stretch reads IGAAAAAGIAIGGAVAAGLAI. Residues 665-708 lie on the Cytoplasmic side of the membrane; sequence FGGKKAYDTWKTSRGNVMTGSQSNPLYTQNQNNGNNPLYSAPAE. A compositionally biased stretch (polar residues) spans 682 to 702; that stretch reads MTGSQSNPLYTQNQNNGNNPL. The disordered stretch occupies residues 682 to 708; the sequence is MTGSQSNPLYTQNQNNGNNPLYSAPAE.

The protein belongs to the prespore-cell-inducing factor family. In terms of assembly, forms a complex with dicB.

It is found in the membrane. It localises to the secreted. In terms of biological role, acts as a quorum sensing protein regulating discoidin gene expression during growth and development. D.discoideum is a single-celled amoebae and switches to multicellular development when food becomes limited. As the growing cells reach a high density, they begin expressing discoidin genes. The ability of psiF/dicA to induce discoidin gene expression when present in conditioned medium, suggests that it allows cells to sense their local density. The sequence is that of Protein psiF (psiF) from Dictyostelium discoideum (Social amoeba).